The primary structure comprises 364 residues: Adenine deaminase (364 aa).

Zn(2+)-binding residues include H25, H27, and H221. E224 (proton donor) is an active-site residue. A Zn(2+)-binding site is contributed by D301. D302 is a binding site for substrate.

It belongs to the metallo-dependent hydrolases superfamily. Adenosine and AMP deaminases family. Adenine deaminase type 2 subfamily. Zn(2+) is required as a cofactor.

The protein localises to the cytoplasm. It is found in the nucleus. It catalyses the reaction adenine + H2O + H(+) = hypoxanthine + NH4(+). Functionally, catalyzes the hydrolytic deamination of adenine to hypoxanthine. Plays an important role in the purine salvage pathway and in nitrogen catabolism. Has no activity with adenosine as a substrate. The sequence is that of Adenine deaminase (aah1) from Emericella nidulans (strain FGSC A4 / ATCC 38163 / CBS 112.46 / NRRL 194 / M139) (Aspergillus nidulans).